We begin with the raw amino-acid sequence, 555 residues long: Zinc transporter ZIP5 (555 aa).

Residues 1-242 lie on the Extracellular side of the membrane; it reads MGGQTVWMTL…HSQASKTSEG (242 aa). The disordered stretch occupies residues 108 to 148; sequence KHPSQSISHSHSHEDHHPSQGTTNSPPLRESLDAKSALSGS. The chain crosses the membrane as a helical span at residues 243-263; sequence FLIALGWASLALLVISLPSLV. Topologically, residues 264–314 are cytoplasmic; sequence ALGMAPLLQPSVLQVFLCPMAGMAVGTLCGDALLHLMPHAIFSQHTDHQNA. A helical transmembrane segment spans residues 315–335; it reads VFKGLSVLGGLYLLFIFESLL. Topologically, residues 336 to 408 are extracellular; sequence GLKQHFKNLK…DGIHNLTDGL (73 aa). The segment covering 363-374 has biased composition (polar residues); it reads TSSANQNESSGH. Positions 363–383 are disordered; that stretch reads TSSANQNESSGHGHSHGQAEP. A helical membrane pass occupies residues 409–429; sequence AIGVAFSQSLTGGFSTAIAVF. The Cytoplasmic segment spans residues 430-452; it reads CHELPHELGDLAVLLSAGWPVRR. The chain crosses the membrane as a helical span at residues 453 to 473; it reads LLVFSGLSALLGFVGVLAGSA. Residues 474 to 482 lie on the Extracellular side of the membrane; the sequence is LGNHWASHS. The helical transmembrane segment at 483-503 threads the bilayer; it reads PWILTLTAGVFLYVALADMMP. Topologically, residues 504-518 are cytoplasmic; it reads EMLHGACGSVSPLKR. The helical transmembrane segment at 519 to 539 threads the bilayer; it reads FLLQALGLLTGGAIMLCIALF. Residues 540–555 are Extracellular-facing; that stretch reads EDHIAVSLGENSLGEN.

Belongs to the ZIP transporter (TC 2.A.5) family.

The protein resides in the basolateral cell membrane. The catalysed reaction is Zn(2+)(in) = Zn(2+)(out). Its function is as follows. Uniporter that transports zinc(2+) into polarized cells of enterocytes, pancreatic acinar and endoderm cells across the basolateral membrane and participates, notably, in zinc excretion from the intestine by the uptake of zinc from the blood into the intestine. The transport mechanism is temperature- and concentration-dependent and saturable. Mediates zinc homeostasis that is essential for venous angiogenesis. This chain is Zinc transporter ZIP5 (slc39a5), found in Danio rerio (Zebrafish).